The following is a 963-amino-acid chain: Protein NLP2 (963 aa).

In terms of domain architecture, RWP-RK spans Arg-635 to Ser-716. Polar residues predominate over residues Met-734 to Gln-755. Residues Met-734–Asn-794 form a disordered region. Low complexity predominate over residues Gly-756–Asn-794. Residues Ala-862–Ala-945 form the PB1 domain.

The protein localises to the nucleus. In terms of biological role, probable transcription factor. This chain is Protein NLP2 (NLP2), found in Arabidopsis thaliana (Mouse-ear cress).